The following is a 648-amino-acid chain: Indolepyruvate oxidoreductase subunit IorA (648 aa).

4Fe-4S ferredoxin-type domains are found at residues 585–614 (PIYQ…WDPE) and 616–645 (KKAK…KVRE). The [4Fe-4S] cluster site is built by cysteine 594, cysteine 597, cysteine 600, cysteine 606, cysteine 625, cysteine 628, cysteine 631, and cysteine 635.

In terms of assembly, heterodimer of the IorA and IorB subunits. It depends on [4Fe-4S] cluster as a cofactor.

The enzyme catalyses indole-3-pyruvate + 2 oxidized [2Fe-2S]-[ferredoxin] + CoA = (indol-3-yl)acetyl-CoA + 2 reduced [2Fe-2S]-[ferredoxin] + CO2 + H(+). Its function is as follows. Catalyzes the ferredoxin-dependent oxidative decarboxylation of arylpyruvates. The sequence is that of Indolepyruvate oxidoreductase subunit IorA (iorA) from Pyrococcus abyssi (strain GE5 / Orsay).